Reading from the N-terminus, the 419-residue chain is Transcription termination factor Rho (419 aa).

The Rho RNA-BD domain occupies 48 to 123 (GFTCSGTLEI…VRLDSINGDH (76 aa)). Residues 169–174 (GKGQRA), 181–186 (KIGKTV), and arginine 212 contribute to the ATP site.

The protein belongs to the Rho family. In terms of assembly, homohexamer. The homohexamer assembles into an open ring structure.

Functionally, facilitates transcription termination by a mechanism that involves Rho binding to the nascent RNA, activation of Rho's RNA-dependent ATPase activity, and release of the mRNA from the DNA template. The polypeptide is Transcription termination factor Rho (Neisseria gonorrhoeae).